A 212-amino-acid chain; its full sequence is MKLSKYIDHTLLKPQATEKDILKLIEEAKTYDFASVCVNPSWVKLAYENLKDTDVKVCTVVGFPLGATSTASKVYETKVAIEDGADEIDMVISVGQLKSGNDEYVKEEIKKIVEASKNRLVKVIIETCLLTEEEKVKACTFSKEAGADYVKTSTGFSTGGAKPEDIKLMRETVGKNMGVKASGGIHTREEMEVMIENGATRIGASCGVELVK.

The active-site Proton donor/acceptor is aspartate 89. The active-site Schiff-base intermediate with acetaldehyde is the lysine 151. Lysine 180 acts as the Proton donor/acceptor in catalysis.

This sequence belongs to the DeoC/FbaB aldolase family. DeoC type 1 subfamily.

The protein resides in the cytoplasm. The enzyme catalyses 2-deoxy-D-ribose 5-phosphate = D-glyceraldehyde 3-phosphate + acetaldehyde. It participates in carbohydrate degradation; 2-deoxy-D-ribose 1-phosphate degradation; D-glyceraldehyde 3-phosphate and acetaldehyde from 2-deoxy-alpha-D-ribose 1-phosphate: step 2/2. In terms of biological role, catalyzes a reversible aldol reaction between acetaldehyde and D-glyceraldehyde 3-phosphate to generate 2-deoxy-D-ribose 5-phosphate. This chain is Deoxyribose-phosphate aldolase, found in Clostridium botulinum (strain Okra / Type B1).